A 351-amino-acid chain; its full sequence is Alcohol dehydrogenase 2 (351 aa).

Zn(2+) is bound by residues Cys47, His70, Cys101, Cys104, Cys107, Cys115, and Cys157. Residues Gly181 to Gly187, Asp205, Lys209, Val271 to Leu273, and Arg343 each bind NAD(+).

Belongs to the zinc-containing alcohol dehydrogenase family. As to quaternary structure, homotetramer. Zn(2+) serves as cofactor.

The catalysed reaction is a primary alcohol + NAD(+) = an aldehyde + NADH + H(+). It carries out the reaction a secondary alcohol + NAD(+) = a ketone + NADH + H(+). The sequence is that of Alcohol dehydrogenase 2 (sodh-2) from Caenorhabditis elegans.